We begin with the raw amino-acid sequence, 295 residues long: Protoheme IX farnesyltransferase 2 (295 aa).

A run of 9 helical transmembrane segments spans residues 9 to 29 (ITKPGIIFGNVLSVAGGFFLA), 36 to 56 (FALFLAVVIGTSLVVASGCVF), 83 to 103 (LTLALVYATLLGVAGFSLLYV), 108 to 128 (LSAFCALIGFIVYVGFYSLWL), 135 to 155 (GTLVGSLSGAMPPVIGYCAVS), 163 to 183 (VTLLVMFSLWQMPHSFAIAIF), 209 to 229 (IVLYVLAFVLATLMLTLGGYA), 230 to 250 (GLGYLAVAAAMGLYWLYMAWG), and 264 to 284 (VFGFSILTVTALSVMMGVDSQ).

The protein belongs to the UbiA prenyltransferase family. Protoheme IX farnesyltransferase subfamily.

It is found in the cell inner membrane. It catalyses the reaction heme b + (2E,6E)-farnesyl diphosphate + H2O = Fe(II)-heme o + diphosphate. It participates in porphyrin-containing compound metabolism; heme O biosynthesis; heme O from protoheme: step 1/1. Converts heme B (protoheme IX) to heme O by substitution of the vinyl group on carbon 2 of heme B porphyrin ring with a hydroxyethyl farnesyl side group. The sequence is that of Protoheme IX farnesyltransferase 2 from Pseudomonas putida (strain W619).